Here is a 288-residue protein sequence, read N- to C-terminus: MAIARQDVNISSPEATTSDAQSTANPTVLVFDSGVGGLSIYREIREKLPDAHYIYVFDNEAFPYGEKPQEFIIERVVRIVSAVAQQHELAAIVIACNTASTVSLPALRAKFTDIPIVGVVPAIKPAAKLTCNGVVGLLATRATVKRPYTHELIERFATECKVHLLGSAELVELAEKKLHGEKVSCDELRRILAPWLKMKEPPDTVVLGCTHFPLLEEELLSVLPDGTRIIDSGGAIARRTAWLVVNQDKIRGSKEISFAYCLKEDEYSELLKPVLADFGFKMLRKLAL.

The segment at 1 to 21 (MAIARQDVNISSPEATTSDAQ) is disordered. Polar residues predominate over residues 8–21 (VNISSPEATTSDAQ). Residues 32 to 33 (DS) and 64 to 65 (YG) each bind substrate. The Proton donor/acceptor role is filled by Cys-96. Residue 97–98 (NT) coordinates substrate. Cys-209 (proton donor/acceptor) is an active-site residue. 210 to 211 (TH) provides a ligand contact to substrate.

The protein belongs to the aspartate/glutamate racemases family.

It catalyses the reaction L-glutamate = D-glutamate. The protein operates within cell wall biogenesis; peptidoglycan biosynthesis. In terms of biological role, provides the (R)-glutamate required for cell wall biosynthesis. This Proteus mirabilis (strain HI4320) protein is Glutamate racemase.